We begin with the raw amino-acid sequence, 305 residues long: Glycine cleavage system transcriptional activator (305 aa).

An HTH lysR-type domain is found at 6 to 63; the sequence is PPLNALRVFDAAARHLSFTRAAEELFVTQAAVSHQIKSLEDFLGLKLFRRRNRSLLLT. The segment at residues 23 to 42 is a DNA-binding region (H-T-H motif); that stretch reads FTRAAEELFVTQAAVSHQIK.

This sequence belongs to the LysR transcriptional regulatory family.

It localises to the cytoplasm. In terms of biological role, regulatory protein for the glycine cleavage system operon (gcv). Mediates activation of gcv by glycine and repression by purines. GcvA is negatively autoregulated. Binds to three sites upstream of the gcv promoter. This chain is Glycine cleavage system transcriptional activator (gcvA), found in Escherichia coli O157:H7.